We begin with the raw amino-acid sequence, 513 residues long: ATP synthase subunit alpha (513 aa).

169 to 176 (GDRQTGKS) lines the ATP pocket.

Belongs to the ATPase alpha/beta chains family. In terms of assembly, F-type ATPases have 2 components, CF(1) - the catalytic core - and CF(0) - the membrane proton channel. CF(1) has five subunits: alpha(3), beta(3), gamma(1), delta(1), epsilon(1). CF(0) has three main subunits: a(1), b(2) and c(9-12). The alpha and beta chains form an alternating ring which encloses part of the gamma chain. CF(1) is attached to CF(0) by a central stalk formed by the gamma and epsilon chains, while a peripheral stalk is formed by the delta and b chains.

Its subcellular location is the cell membrane. The catalysed reaction is ATP + H2O + 4 H(+)(in) = ADP + phosphate + 5 H(+)(out). Produces ATP from ADP in the presence of a proton gradient across the membrane. The alpha chain is a regulatory subunit. This Baumannia cicadellinicola subsp. Homalodisca coagulata protein is ATP synthase subunit alpha.